The following is a 178-amino-acid chain: Large ribosomal subunit protein uL6 (178 aa).

This sequence belongs to the universal ribosomal protein uL6 family. In terms of assembly, part of the 50S ribosomal subunit.

This protein binds to the 23S rRNA, and is important in its secondary structure. It is located near the subunit interface in the base of the L7/L12 stalk, and near the tRNA binding site of the peptidyltransferase center. The protein is Large ribosomal subunit protein uL6 of Francisella philomiragia subsp. philomiragia (strain ATCC 25017 / CCUG 19701 / FSC 153 / O#319-036).